A 214-amino-acid chain; its full sequence is 3,4-dihydroxy-2-butanone 4-phosphate synthase (214 aa).

D-ribulose 5-phosphate-binding positions include 37–38, Asp42, 150–154, and Glu174; these read RE and RRGHT. Glu38 provides a ligand contact to Mg(2+). Mg(2+) is bound at residue His153.

The protein belongs to the DHBP synthase family. In terms of assembly, homodimer. The cofactor is Mg(2+). Mn(2+) is required as a cofactor.

It carries out the reaction D-ribulose 5-phosphate = (2S)-2-hydroxy-3-oxobutyl phosphate + formate + H(+). The protein operates within cofactor biosynthesis; riboflavin biosynthesis; 2-hydroxy-3-oxobutyl phosphate from D-ribulose 5-phosphate: step 1/1. Catalyzes the conversion of D-ribulose 5-phosphate to formate and 3,4-dihydroxy-2-butanone 4-phosphate. The polypeptide is 3,4-dihydroxy-2-butanone 4-phosphate synthase (Desulfotalea psychrophila (strain LSv54 / DSM 12343)).